A 454-amino-acid polypeptide reads, in one-letter code: Guanine deaminase (454 aa).

Zn(2+) contacts are provided by H82 and H84. Substrate contacts are provided by residues H84–Q87, R213–F214, H240–E243, and D330. Zn(2+)-binding residues include H240 and D330. S453 carries the phosphoserine modification.

The protein belongs to the metallo-dependent hydrolases superfamily. ATZ/TRZ family. In terms of assembly, homodimer. Requires Zn(2+) as cofactor.

It catalyses the reaction guanine + H2O + H(+) = xanthine + NH4(+). It participates in purine metabolism; guanine degradation; xanthine from guanine: step 1/1. Catalyzes the hydrolytic deamination of guanine, producing xanthine and ammonia. This is Guanine deaminase from Homo sapiens (Human).